The chain runs to 77 residues: Translation initiation factor IF-1, chloroplastic (77 aa).

Residues 1 to 71 (MKEQKWIHEG…TRGRIIYRLR (71 aa)) enclose the S1-like domain.

This sequence belongs to the IF-1 family. Component of the 30S ribosomal translation pre-initiation complex which assembles on the 30S ribosome in the order IF-2 and IF-3, IF-1 and N-formylmethionyl-tRNA(fMet); mRNA recruitment can occur at any time during PIC assembly.

It localises to the plastid. Its subcellular location is the chloroplast. Functionally, one of the essential components for the initiation of protein synthesis. Stabilizes the binding of IF-2 and IF-3 on the 30S subunit to which N-formylmethionyl-tRNA(fMet) subsequently binds. Helps modulate mRNA selection, yielding the 30S pre-initiation complex (PIC). Upon addition of the 50S ribosomal subunit IF-1, IF-2 and IF-3 are released leaving the mature 70S translation initiation complex. This is Translation initiation factor IF-1, chloroplastic from Daucus carota (Wild carrot).